The primary structure comprises 301 residues: Small ribosomal subunit biogenesis GTPase RsgA (301 aa).

The CP-type G domain maps to 65–224 (YNQLIRPKVA…LVDTPGFGNL (160 aa)). GTP-binding positions include 115 to 118 (SKYD) and 167 to 175 (GNSGVGKST). Zn(2+)-binding residues include Cys247, Cys252, His254, and Cys260.

The protein belongs to the TRAFAC class YlqF/YawG GTPase family. RsgA subfamily. As to quaternary structure, monomer. Associates with 30S ribosomal subunit, binds 16S rRNA. It depends on Zn(2+) as a cofactor.

It localises to the cytoplasm. One of several proteins that assist in the late maturation steps of the functional core of the 30S ribosomal subunit. Helps release RbfA from mature subunits. May play a role in the assembly of ribosomal proteins into the subunit. Circularly permuted GTPase that catalyzes slow GTP hydrolysis, GTPase activity is stimulated by the 30S ribosomal subunit. The sequence is that of Small ribosomal subunit biogenesis GTPase RsgA from Ureaplasma urealyticum serovar 10 (strain ATCC 33699 / Western).